A 459-amino-acid polypeptide reads, in one-letter code: Putrescine aminotransferase (459 aa).

Residues 150 to 151 (GT) and Q274 each bind pyridoxal 5'-phosphate. At K300 the chain carries N6-(pyridoxal phosphate)lysine. A pyridoxal 5'-phosphate-binding site is contributed by T332.

This sequence belongs to the class-III pyridoxal-phosphate-dependent aminotransferase family. Putrescine aminotransferase subfamily. It depends on pyridoxal 5'-phosphate as a cofactor.

The catalysed reaction is an alkane-alpha,omega-diamine + 2-oxoglutarate = an omega-aminoaldehyde + L-glutamate. The enzyme catalyses putrescine + 2-oxoglutarate = 1-pyrroline + L-glutamate + H2O. It carries out the reaction cadaverine + 2-oxoglutarate = 5-aminopentanal + L-glutamate. The protein operates within amine and polyamine degradation; putrescine degradation; 4-aminobutanal from putrescine (transaminase route): step 1/1. Its function is as follows. Catalyzes the aminotransferase reaction from putrescine to 2-oxoglutarate, leading to glutamate and 4-aminobutanal, which spontaneously cyclizes to form 1-pyrroline. This is the first step in one of two pathways for putrescine degradation, where putrescine is converted into 4-aminobutanoate (gamma-aminobutyrate or GABA) via 4-aminobutanal. Also functions as a cadaverine transaminase in a a L-lysine degradation pathway to succinate that proceeds via cadaverine, glutarate and L-2-hydroxyglutarate. This Escherichia coli (strain ATCC 8739 / DSM 1576 / NBRC 3972 / NCIMB 8545 / WDCM 00012 / Crooks) protein is Putrescine aminotransferase.